The sequence spans 212 residues: Octanoyltransferase (212 aa).

The region spanning 34-208 (GQRQDTLILL…AFERQFNARC (175 aa)) is the BPL/LPL catalytic domain. Substrate contacts are provided by residues 72-79 (RGGQVTYH), 139-141 (SIG), and 152-154 (GLS). Cys170 functions as the Acyl-thioester intermediate in the catalytic mechanism.

It belongs to the LipB family.

It is found in the cytoplasm. The enzyme catalyses octanoyl-[ACP] + L-lysyl-[protein] = N(6)-octanoyl-L-lysyl-[protein] + holo-[ACP] + H(+). It functions in the pathway protein modification; protein lipoylation via endogenous pathway; protein N(6)-(lipoyl)lysine from octanoyl-[acyl-carrier-protein]: step 1/2. In terms of biological role, catalyzes the transfer of endogenously produced octanoic acid from octanoyl-acyl-carrier-protein onto the lipoyl domains of lipoate-dependent enzymes. Lipoyl-ACP can also act as a substrate although octanoyl-ACP is likely to be the physiological substrate. The polypeptide is Octanoyltransferase (Magnetococcus marinus (strain ATCC BAA-1437 / JCM 17883 / MC-1)).